A 286-amino-acid polypeptide reads, in one-letter code: Small ribosomal subunit protein uS2 (286 aa).

The tract at residues 231-286 is disordered; it reads ERAQAEAKAAAGDNDAPVSSEGESTEVASDAASTASETTATSSDESAAESSEAESK. Residues 255–280 are compositionally biased toward low complexity; it reads TEVASDAASTASETTATSSDESAAES.

It belongs to the universal ribosomal protein uS2 family.

The sequence is that of Small ribosomal subunit protein uS2 from Corynebacterium kroppenstedtii (strain DSM 44385 / JCM 11950 / CIP 105744 / CCUG 35717).